Here is a 305-residue protein sequence, read N- to C-terminus: Putative S-adenosyl-L-methionine-dependent methyltransferase MAB_3787 (305 aa).

S-adenosyl-L-methionine-binding positions include Asp-132 and Asp-161–Leu-162.

This sequence belongs to the UPF0677 family.

Its function is as follows. Exhibits S-adenosyl-L-methionine-dependent methyltransferase activity. The polypeptide is Putative S-adenosyl-L-methionine-dependent methyltransferase MAB_3787 (Mycobacteroides abscessus (strain ATCC 19977 / DSM 44196 / CCUG 20993 / CIP 104536 / JCM 13569 / NCTC 13031 / TMC 1543 / L948) (Mycobacterium abscessus)).